Here is a 358-residue protein sequence, read N- to C-terminus: Dual-specificity RNA methyltransferase RlmN (358 aa).

The Proton acceptor role is filled by glutamate 91. In terms of domain architecture, Radical SAM core spans 102–337 (GNIRITQCLS…TILRKSKGQD (236 aa)). Residues cysteine 109 and cysteine 342 are joined by a disulfide bond. Cysteine 116, cysteine 120, and cysteine 123 together coordinate [4Fe-4S] cluster. Residues 169-170 (GE), serine 201, 223-225 (SLH), and asparagine 299 each bind S-adenosyl-L-methionine. The S-methylcysteine intermediate role is filled by cysteine 342.

The protein belongs to the radical SAM superfamily. RlmN family. The cofactor is [4Fe-4S] cluster.

The protein resides in the cytoplasm. The enzyme catalyses adenosine(2503) in 23S rRNA + 2 reduced [2Fe-2S]-[ferredoxin] + 2 S-adenosyl-L-methionine = 2-methyladenosine(2503) in 23S rRNA + 5'-deoxyadenosine + L-methionine + 2 oxidized [2Fe-2S]-[ferredoxin] + S-adenosyl-L-homocysteine. The catalysed reaction is adenosine(37) in tRNA + 2 reduced [2Fe-2S]-[ferredoxin] + 2 S-adenosyl-L-methionine = 2-methyladenosine(37) in tRNA + 5'-deoxyadenosine + L-methionine + 2 oxidized [2Fe-2S]-[ferredoxin] + S-adenosyl-L-homocysteine. Functionally, specifically methylates position 2 of adenine 2503 in 23S rRNA and position 2 of adenine 37 in tRNAs. m2A2503 modification seems to play a crucial role in the proofreading step occurring at the peptidyl transferase center and thus would serve to optimize ribosomal fidelity. The chain is Dual-specificity RNA methyltransferase RlmN from Lawsonia intracellularis (strain PHE/MN1-00).